The primary structure comprises 139 residues: Putative lipoprotein MIP_01412 (139 aa).

An N-terminal signal peptide occupies residues 1–19 (MRNRTVAAGAVLTAALLGA). Residue Cys20 is the site of N-palmitoyl cysteine attachment. Residue Cys20 is the site of S-diacylglycerol cysteine attachment.

It belongs to the mycobacterial 19 kDa antigen family.

It localises to the cell membrane. The protein is Putative lipoprotein MIP_01412 of Mycobacterium indicus pranii (strain DSM 45239 / MTCC 9506).